A 344-amino-acid chain; its full sequence is S-adenosylmethionine:tRNA ribosyltransferase-isomerase (344 aa).

It belongs to the QueA family. Monomer.

It localises to the cytoplasm. The enzyme catalyses 7-aminomethyl-7-carbaguanosine(34) in tRNA + S-adenosyl-L-methionine = epoxyqueuosine(34) in tRNA + adenine + L-methionine + 2 H(+). Its pathway is tRNA modification; tRNA-queuosine biosynthesis. Its function is as follows. Transfers and isomerizes the ribose moiety from AdoMet to the 7-aminomethyl group of 7-deazaguanine (preQ1-tRNA) to give epoxyqueuosine (oQ-tRNA). This Acinetobacter baylyi (strain ATCC 33305 / BD413 / ADP1) protein is S-adenosylmethionine:tRNA ribosyltransferase-isomerase.